The sequence spans 360 residues: 3-dehydroquinate synthase (360 aa).

Residues 72 to 77 (DGEEYK), 106 to 110 (GVIGD), 130 to 131 (TT), Lys-143, and Lys-152 contribute to the NAD(+) site. Glu-185, His-248, and His-265 together coordinate Zn(2+).

Belongs to the sugar phosphate cyclases superfamily. Dehydroquinate synthase family. Co(2+) serves as cofactor. It depends on Zn(2+) as a cofactor. NAD(+) is required as a cofactor.

The protein resides in the cytoplasm. The enzyme catalyses 7-phospho-2-dehydro-3-deoxy-D-arabino-heptonate = 3-dehydroquinate + phosphate. Its pathway is metabolic intermediate biosynthesis; chorismate biosynthesis; chorismate from D-erythrose 4-phosphate and phosphoenolpyruvate: step 2/7. Catalyzes the conversion of 3-deoxy-D-arabino-heptulosonate 7-phosphate (DAHP) to dehydroquinate (DHQ). The polypeptide is 3-dehydroquinate synthase (Geotalea uraniireducens (strain Rf4) (Geobacter uraniireducens)).